The sequence spans 370 residues: Anhydro-N-acetylmuramic acid kinase (370 aa).

An ATP-binding site is contributed by 13-20 (GTSMDGVD).

Belongs to the anhydro-N-acetylmuramic acid kinase family.

It catalyses the reaction 1,6-anhydro-N-acetyl-beta-muramate + ATP + H2O = N-acetyl-D-muramate 6-phosphate + ADP + H(+). The protein operates within amino-sugar metabolism; 1,6-anhydro-N-acetylmuramate degradation. Its pathway is cell wall biogenesis; peptidoglycan recycling. In terms of biological role, catalyzes the specific phosphorylation of 1,6-anhydro-N-acetylmuramic acid (anhMurNAc) with the simultaneous cleavage of the 1,6-anhydro ring, generating MurNAc-6-P. Is required for the utilization of anhMurNAc either imported from the medium or derived from its own cell wall murein, and thus plays a role in cell wall recycling. This is Anhydro-N-acetylmuramic acid kinase from Vibrio vulnificus (strain YJ016).